Reading from the N-terminus, the 842-residue chain is MVTVGNYCEAEGPVGPAWMQDGLSPCFFFTLVPSTRMALGTLALVLALPCRRRERPAGADSLSWGAGPRISPYVLQLLLATLQAALPLAGLAGRVGTARGAPLPSYLLLASVLESLAGACGLWLLVVERSQARQRLAMGIWIKFRHSPGLLLLWTVAFAAENLALVSWNSPQWWWARADLGQQVQFSLWVLRYVVSGGLFVLGLWAPGLRPQSYTLQVHEEDQDVERSQVRSAAQQSTWRDFGRKLRLLSGYLWPRGSPALQLVVLICLGLMGLERALNVLVPIFYRNIVNLLTEKAPWNSLAWTVTSYVFLKFLQGGGTGSTGFVSNLRTFLWIRVQQFTSRRVELLIFSHLHELSLRWHLGRRTGEVLRIADRGTSSVTGLLSYLVFNVIPTLADIIIGIIYFSMFFNAWFGLIVFLCMSLYLTLTIVVTEWRTKFRRAMNTQENATRARAVDSLLNFETVKYYNAESYEVERYREAIIKYQGLEWKSSASLVLLNQTQNLVIGLGLLAGSLLCAYFVTEQKLQVGDYVLFGTYIIQLYMPLNWFGTYYRMIQTNFIDMENMFDLLKEETEVKDLPGAGPLRFQKGRIEFENVHFSYADGRETLQDVSFTVMPGQTLALVGPSGAGKSTILRLLFRFYDISSGCIRIDGQDISQVTQASLRSHIGVVPQDTVLFNDTIADNIRYGRVTAGNDEVEAAAQAAGIHDAIMAFPEGYRTQVGERGLKLSGGEKQRVAIARTILKAPGIILLDEATSALDTSNERAIQASLAKVCANRTTIVVAHRLSTVVNADQILVIKDGCIVERGRHEALLSRGGVYADMWQLQQGQEETSEDTKPQTMER.

The Lumenal segment spans residues 1–26; the sequence is MVTVGNYCEAEGPVGPAWMQDGLSPC. The interval 1-205 is required for the lysosomal targeting; that stretch reads MVTVGNYCEA…SGGLFVLGLW (205 aa). Positions 1–236 are required for ATPase activity; sequence MVTVGNYCEA…RSQVRSAAQQ (236 aa). N6 carries an N-linked (GlcNAc...) asparagine glycan. A disulfide bond links C8 and C26. The helical transmembrane segment at 27–47 threads the bilayer; sequence FFFTLVPSTRMALGTLALVLA. The Cytoplasmic portion of the chain corresponds to 48–72; sequence LPCRRRERPAGADSLSWGAGPRISP. The chain crosses the membrane as a helical span at residues 73 to 93; it reads YVLQLLLATLQAALPLAGLAG. Topologically, residues 94-106 are lumenal; the sequence is RVGTARGAPLPSY. A helical transmembrane segment spans residues 107–127; sequence LLLASVLESLAGACGLWLLVV. The Cytoplasmic portion of the chain corresponds to 128 to 147; that stretch reads ERSQARQRLAMGIWIKFRHS. Residues 148–168 form a helical membrane-spanning segment; sequence PGLLLLWTVAFAAENLALVSW. Residues 169-185 are Lumenal-facing; it reads NSPQWWWARADLGQQVQ. Residues 186–206 traverse the membrane as a helical segment; sequence FSLWVLRYVVSGGLFVLGLWA. The Cytoplasmic portion of the chain corresponds to 207–263; sequence PGLRPQSYTLQVHEEDQDVERSQVRSAAQQSTWRDFGRKLRLLSGYLWPRGSPALQL. The helical transmembrane segment at 264 to 284 threads the bilayer; that stretch reads VVLICLGLMGLERALNVLVPI. Residues 265 to 556 form the ABC transmembrane type-1 domain; it reads VLICLGLMGL…FGTYYRMIQT (292 aa). The Lumenal portion of the chain corresponds to 285 to 291; it reads FYRNIVN. Residues 292–312 traverse the membrane as a helical segment; it reads LLTEKAPWNSLAWTVTSYVFL. The Cytoplasmic portion of the chain corresponds to 313 to 375; it reads KFLQGGGTGS…TGEVLRIADR (63 aa). A helical membrane pass occupies residues 376–396; the sequence is GTSSVTGLLSYLVFNVIPTLA. A topological domain (lumenal) is located at residue D397. Residues 398-418 form a helical membrane-spanning segment; the sequence is IIIGIIYFSMFFNAWFGLIVF. Over 419–499 the chain is Cytoplasmic; that stretch reads LCMSLYLTLT…SSASLVLLNQ (81 aa). Residues 500-520 form a helical membrane-spanning segment; the sequence is TQNLVIGLGLLAGSLLCAYFV. Topologically, residues 521-529 are lumenal; sequence TEQKLQVGD. The helical transmembrane segment at 530–550 threads the bilayer; that stretch reads YVLFGTYIIQLYMPLNWFGTY. Residues 551 to 842 are Cytoplasmic-facing; it reads YRMIQTNFID…EDTKPQTMER (292 aa). An ABC transporter domain is found at 590–824; the sequence is IEFENVHFSY…GGVYADMWQL (235 aa). ATP contacts are provided by residues Y599 and 623–634; that span reads GPSGAGKSTILR.

It belongs to the ABC transporter superfamily. ABCB family. Heavy Metal importer (TC 3.A.1.210) subfamily. In terms of assembly, homodimer. Post-translationally, N-glycosylated. As to expression, widely expressed. High expression is detected in the retinal epithelium. Expressed in mature erythrocytes.

Its subcellular location is the cell membrane. The protein localises to the mitochondrion outer membrane. It is found in the endoplasmic reticulum membrane. The protein resides in the golgi apparatus membrane. It localises to the endosome membrane. Its subcellular location is the lysosome membrane. The protein localises to the late endosome membrane. It is found in the early endosome membrane. The protein resides in the secreted. It localises to the extracellular exosome. Its subcellular location is the mitochondrion. The protein localises to the endosome. It is found in the multivesicular body membrane. The protein resides in the melanosome membrane. It carries out the reaction heme b(in) + ATP + H2O = heme b(out) + ADP + phosphate + H(+). The catalysed reaction is coproporphyrin III(in) + ATP + H2O = coproporphyrin III(out) + ADP + phosphate + H(+). It catalyses the reaction pheophorbide a(in) + ATP + H2O = pheophorbide a(out) + ADP + phosphate + H(+). The enzyme catalyses coproporphyrinogen III(in) + ATP + H2O = coproporphyrinogen III(out) + ADP + phosphate + H(+). It carries out the reaction protoporphyrin IX(in) + ATP + H2O = protoporphyrin IX(out) + ADP + phosphate + H(+). The catalysed reaction is coproporphyrin I(in) + ATP + H2O = coproporphyrin I(out) + ADP + phosphate + H(+). It catalyses the reaction uroporphyrin I(in) + ATP + H2O = uroporphyrin I(out) + ADP + phosphate + H(+). The enzyme catalyses uroporphyrin III(in) + ATP + H2O = uroporphyrin III(out) + ADP + phosphate + H(+). With respect to regulation, ATPase activity is inhibited by MgATP with an IC(50) of 1.03 mM and up-regulated by coporphyrin III&gt; hemin &gt; protoporphyrin IX. ATPase activity for hemin is up-regulated by glutathione. The ATPase activity is impaired by increasing copper concentrations (0-300 uM). The ATPase activity is stimulated in presence of glutathione for increasing copper concentrations (0-300 uM). Functionally, ATP-dependent transporter that catalyzes the transport of a broad-spectrum of porphyrins from the cytoplasm to the extracellular space through the plasma membrane or into the vesicle lumen. May also function as an ATP-dependent importer of porphyrins from the cytoplasm into the mitochondria, in turn may participate in the de novo heme biosynthesis regulation and in the coordination of heme and iron homeostasis during phenylhydrazine stress. May also play a key role in the early steps of melanogenesis producing PMEL amyloid fibrils. In vitro, it confers to cells a resistance to toxic metal such as arsenic and cadmium and against chemotherapeutics agent such as 5-fluorouracil, SN-38 and vincristin. In addition may play a role in the transition metal homeostasis. This Homo sapiens (Human) protein is ATP-binding cassette sub-family B member 6.